Reading from the N-terminus, the 872-residue chain is Telomerase component p95 (872 aa).

Disordered regions lie at residues 55 to 75 and 471 to 492; these read NQDQ…NSNK and KNNK…ESTS. Residues 474-486 show a composition bias toward basic and acidic residues; it reads KNQEETPETKDET.

In terms of assembly, telomerase consist of two subunit, p80 and p95 that form a 1:1:1 complex with the 159 nt telomerase RNA.

It is found in the nucleus. The protein resides in the chromosome. The protein localises to the telomere. It catalyses the reaction DNA(n) + a 2'-deoxyribonucleoside 5'-triphosphate = DNA(n+1) + diphosphate. Functionally, ribonucleoprotein DNA polymerase that catalyzes the de novo synthesis of telomeric simple sequence repeats. Subunit p95 contains some or all of the template-independent primer DNA-binding site termed the anchor site. The sequence is that of Telomerase component p95 from Tetrahymena thermophila.